Here is a 94-residue protein sequence, read N- to C-terminus: Co-chaperonin GroES (94 aa).

This sequence belongs to the GroES chaperonin family. Heptamer of 7 subunits arranged in a ring. Interacts with the chaperonin GroEL.

The protein resides in the cytoplasm. Its function is as follows. Together with the chaperonin GroEL, plays an essential role in assisting protein folding. The GroEL-GroES system forms a nano-cage that allows encapsulation of the non-native substrate proteins and provides a physical environment optimized to promote and accelerate protein folding. GroES binds to the apical surface of the GroEL ring, thereby capping the opening of the GroEL channel. This Bacillus cereus (strain ZK / E33L) protein is Co-chaperonin GroES.